The primary structure comprises 603 residues: Autophagy-related protein 13a (603 aa).

Ser248 bears the Phosphoserine mark. 2 disordered regions span residues 258 to 477 (PSPG…DDLD) and 498 to 518 (SHSLDRRKTSSSISQSLPLGR). Polar residues predominate over residues 301-315 (ATPNQSFSPAQSHQL). A compositionally biased stretch (basic and acidic residues) spans 320 to 331 (HDFHWSRTDAFG). 2 stretches are compositionally biased toward polar residues: residues 371 to 386 (IPSSATLNRYVSSNFS) and 419 to 437 (SSRSGESPSGLMNQYPTQK). A compositionally biased stretch (low complexity) spans 453–473 (LSSSDSPRFAFSRSPSRLSSQ).

This sequence belongs to the ATG13 family. Plant subfamily. In terms of assembly, interacts with ATG1A. Interacts with ATG11 and ATG101. Post-translationally, phosphorylated during nutrient starvation. Dephosphorylated in nutrient-rich conditions.

The protein resides in the cytoplasmic vesicle. Its subcellular location is the autophagosome. Its function is as follows. Involved in autophagy in a nutritional condition dependent manner. The ATG1-ATG13 protein kinase complex regulates downstream events required for autophagosome enclosure and/or vacuolar delivery. Becomes a target of autophagy under nutrient starvation. Connects autophagy to plant nutritional status. This chain is Autophagy-related protein 13a, found in Arabidopsis thaliana (Mouse-ear cress).